The primary structure comprises 323 residues: Beta-ketoacyl-[acyl-carrier-protein] synthase III (323 aa).

Catalysis depends on residues Cys-114 and His-250. Positions 251 to 255 (QANKR) are ACP-binding. Asn-280 is a catalytic residue.

Belongs to the thiolase-like superfamily. FabH family. As to quaternary structure, homodimer.

Its subcellular location is the cytoplasm. The catalysed reaction is malonyl-[ACP] + acetyl-CoA + H(+) = 3-oxobutanoyl-[ACP] + CO2 + CoA. Its pathway is lipid metabolism; fatty acid biosynthesis. Its function is as follows. Catalyzes the condensation reaction of fatty acid synthesis by the addition to an acyl acceptor of two carbons from malonyl-ACP. Catalyzes the first condensation reaction which initiates fatty acid synthesis and may therefore play a role in governing the total rate of fatty acid production. Possesses both acetoacetyl-ACP synthase and acetyl transacylase activities. Its substrate specificity determines the biosynthesis of branched-chain and/or straight-chain of fatty acids. This is Beta-ketoacyl-[acyl-carrier-protein] synthase III from Hyphomonas neptunium (strain ATCC 15444).